The following is a 285-amino-acid chain: Protease HtpX homolog (285 aa).

A run of 2 helical transmembrane segments spans residues threonine 7–glycine 27 and glycine 30–aspartate 50. Zn(2+) is bound at residue histidine 131. Glutamate 132 is an active-site residue. Residue histidine 135 coordinates Zn(2+). Transmembrane regions (helical) follow at residues isoleucine 146 to glycine 166 and isoleucine 177 to isoleucine 197. Glutamate 202 lines the Zn(2+) pocket.

It belongs to the peptidase M48B family. Zn(2+) is required as a cofactor.

It is found in the cell inner membrane. This Burkholderia multivorans (strain ATCC 17616 / 249) protein is Protease HtpX homolog.